We begin with the raw amino-acid sequence, 229 residues long: uncharacterized protein (229 aa).

The disordered stretch occupies residues 1 to 41; the sequence is MRSAKVGVARQLETKKPQTGRKISTSSRGTIHSQQSQPEDI. Residues 21-39 show a composition bias toward polar residues; sequence RKISTSSRGTIHSQQSQPE. EF-hand domains lie at 48 to 83, 84 to 119, 123 to 158, and 159 to 193; these read KELK…IGLH, ANKA…SQNI, TNEE…FGDF, and DDEL…YLLN. Ca(2+) is bound by residues D61, D63, S65, E72, D97, D99, N101, E103, E108, D136, D138, N140, and E147. A compositionally biased stretch (basic and acidic residues) spans 194-217; it reads DPKHDIDTGDSDVERYDDRHDDRA. Positions 194 to 229 are disordered; the sequence is DPKHDIDTGDSDVERYDDRHDDRASPMPNHLSTVPE.

This is an uncharacterized protein from Caenorhabditis elegans.